A 34-amino-acid polypeptide reads, in one-letter code: Hemopexin (34 aa).

Positions 1–25 are disordered; it reads RPLTQHKPHTPGDEHPHGAEPPGXD.

The protein belongs to the hemopexin family. As to expression, expressed by the liver and secreted in plasma.

Its subcellular location is the secreted. Binds heme and transports it to the liver for breakdown and iron recovery, after which the free hemopexin returns to the circulation. This is Hemopexin (HPX) from Gallus gallus (Chicken).